The sequence spans 235 residues: MKEENWNNNLEQMMEAGVHFGHQARKWNPKIAPYLLKDTKKIRIIHITHTARLLADACDFATNAAREGKQFMLVGTRYQTAGLVATTAKKARCHYVNTKWLGGMLTNWSTIKTRLQKFEQLEAQEIAGAFNHLPKKEVAVMKRQLSQLRKYFHGIKYMKKVPDIVIFINQHQDYTAIQECIKLGIPTIGLVDTDCDPNLVDMPIPANDDNRTSIRWILSQLTTAIKEGRSTSLKQ.

Belongs to the universal ribosomal protein uS2 family.

It is found in the plastid. The protein localises to the chloroplast. This Zygnema circumcarinatum (Green alga) protein is Small ribosomal subunit protein uS2c (rps2).